Reading from the N-terminus, the 147-residue chain is Leech anti-platelet protein (147 aa).

The signal sequence occupies residues methionine 1–alanine 21. The tract at residues alanine 21–arginine 71 is disordered. Acidic residues predominate over residues glutamine 22–glycine 41. 3 disulfides stabilise this stretch: cysteine 67–cysteine 145, cysteine 92–cysteine 117, and cysteine 96–cysteine 105.

The N-terminus is blocked. Expressed by salivary glands.

The protein localises to the secreted. Functionally, inhibits collagen-stimulated platelet aggregation (IC(50)=60 nM), dense granule release and serotonin release. Does not inhibit platelet aggregation induced by ADP, arachidonic acid, and thrombin. The sequence is that of Leech anti-platelet protein from Haementeria officinalis (Mexican leech).